The following is a 328-amino-acid chain: tRNA uridine(34) hydroxylase (328 aa).

The region spanning 130–224 (LDEDTVVLDT…YGKDPEVQGE (95 aa)) is the Rhodanese domain. Cysteine 184 acts as the Cysteine persulfide intermediate in catalysis.

This sequence belongs to the TrhO family.

The enzyme catalyses uridine(34) in tRNA + AH2 + O2 = 5-hydroxyuridine(34) in tRNA + A + H2O. Its function is as follows. Catalyzes oxygen-dependent 5-hydroxyuridine (ho5U) modification at position 34 in tRNAs. The protein is tRNA uridine(34) hydroxylase of Streptococcus pyogenes serotype M3 (strain SSI-1).